Consider the following 204-residue polypeptide: Tat proofreading chaperone DmsD (204 aa).

Belongs to the TorD/DmsD family. DmsD subfamily. In terms of assembly, monomer in solution.

In terms of biological role, required for biogenesis/assembly of DMSO reductase, but not for the interaction of the DmsA signal peptide with the Tat system. May be part of a chaperone cascade complex that facilitates a folding-maturation pathway for the substrate protein. The sequence is that of Tat proofreading chaperone DmsD from Salmonella typhimurium (strain LT2 / SGSC1412 / ATCC 700720).